Consider the following 621-residue polypeptide: Chaperone protein HtpG (621 aa).

Residues 1-341 form an a; substrate-binding region; sequence MSNQEYTFQT…SEDLPLNVSR (341 aa). Positions 342–547 are b; the sequence is EILQQNKILA…GDEQNAMMAN (206 aa). Residues 548–621 form a c region; that stretch reads FMRQMGQSVP…RLNSVLLKAL (74 aa).

Belongs to the heat shock protein 90 family. As to quaternary structure, homodimer.

The protein localises to the cytoplasm. In terms of biological role, molecular chaperone. Has ATPase activity. The sequence is that of Chaperone protein HtpG from Helicobacter pylori (strain HPAG1).